Reading from the N-terminus, the 287-residue chain is Orotidine 5'-phosphate decarboxylase (287 aa).

The Proton donor role is filled by Lys-95.

Belongs to the OMP decarboxylase family. Type 2 subfamily.

The catalysed reaction is orotidine 5'-phosphate + H(+) = UMP + CO2. The protein operates within pyrimidine metabolism; UMP biosynthesis via de novo pathway; UMP from orotate: step 2/2. The chain is Orotidine 5'-phosphate decarboxylase from Albidiferax ferrireducens (strain ATCC BAA-621 / DSM 15236 / T118) (Rhodoferax ferrireducens).